We begin with the raw amino-acid sequence, 279 residues long: ATP synthase gamma chain (279 aa).

The protein belongs to the ATPase gamma chain family. In terms of assembly, F-type ATPases have 2 components, CF(1) - the catalytic core - and CF(0) - the membrane proton channel. CF(1) has five subunits: alpha(3), beta(3), gamma(1), delta(1), epsilon(1). CF(0) has three main subunits: a, b and c.

It is found in the cell membrane. Produces ATP from ADP in the presence of a proton gradient across the membrane. The gamma chain is believed to be important in regulating ATPase activity and the flow of protons through the CF(0) complex. This Mycoplasma genitalium (strain ATCC 33530 / DSM 19775 / NCTC 10195 / G37) (Mycoplasmoides genitalium) protein is ATP synthase gamma chain.